We begin with the raw amino-acid sequence, 223 residues long: uncharacterized protein (223 aa).

A mitochondrion-targeting transit peptide spans 1-12; it reads MFRSLVRKTTPL.

It localises to the mitochondrion. This is an uncharacterized protein from Candida albicans (strain WO-1) (Yeast).